Here is a 94-residue protein sequence, read N- to C-terminus: Fungal defensin scedosporisin-2 (94 aa).

The signal sequence occupies residues 1–25; it reads MKFSNISIAALFTILASTAMAAPAA. A propeptide spanning residues 26–56 is cleaved from the precursor; sequence DSPDSIVAREPAPVEETYEAPSGLEKRGFGC. Beta-D-GlcNAc-(1-&gt;4)-Mur2Ac(oyl-L-Ala-gamma-D-Glu-L-Lys-D-Ala-D-Ala)-di-trans,octa-cis-undecaprenyl diphosphate contacts are provided by F54, G55, and C56. Disulfide bonds link C56–C78, C63–C91, and C67–C93. The tract at residues 57-60 is interaction site with membrane interface; it reads PGSE. Residue H66 coordinates beta-D-GlcNAc-(1-&gt;4)-Mur2Ac(oyl-L-Ala-gamma-D-Glu-L-Lys-D-Ala-D-Ala)-di-trans,octa-cis-undecaprenyl diphosphate. The interaction site with membrane interface stretch occupies residues 83–90; that stretch reads IPFVGRPR. Residue C91 coordinates beta-D-GlcNAc-(1-&gt;4)-Mur2Ac(oyl-L-Ala-gamma-D-Glu-L-Lys-D-Ala-D-Ala)-di-trans,octa-cis-undecaprenyl diphosphate.

It belongs to the invertebrate defensin family.

It is found in the secreted. The protein resides in the target cell membrane. In terms of biological role, antibacterial peptide potently active against Gram-positive bacteria. May act by selectively inhibiting peptidoglycan biosynthesis through complex formation with the cell wall precursor lipid II (1:1 molar ratio) thus inhibiting cell wall synthesis. Shows remarkably activity against resistant isolates such as methicillin-resistant Staphylococcus aureus (MRSA) and vancomycin-resistant Enterococci (VRE) at the concentration of micromolar level. Does not act by destroying the membrane integrity, which is consistent with its nonamphiphilic architecture. Acts more rapidly than vancomycin. Shows low hemolysis and cytotoxicity and high serum stability. In vivo, is as efficient as vancomycin to protect mouse peritonitis models from MRSA infections. The sequence is that of Fungal defensin scedosporisin-2 from Pseudallescheria apiosperma (Scedosporium apiospermum).